The chain runs to 330 residues: Probable pectinesterase 55 (330 aa).

The signal sequence occupies residues 1–24 (MGTHRIILGLAALCCFCLPHLIEA). 2 N-linked (GlcNAc...) asparagine glycosylation sites follow: Asn-38 and Asn-52. The active-site Proton donor is the Asp-161. Residue Asp-182 is the Nucleophile of the active site. The substrate site is built by Arg-243 and Trp-245. 2 N-linked (GlcNAc...) asparagine glycosylation sites follow: Asn-257 and Asn-292.

The protein belongs to the pectinesterase family.

Its subcellular location is the secreted. It localises to the cell wall. It catalyses the reaction [(1-&gt;4)-alpha-D-galacturonosyl methyl ester](n) + n H2O = [(1-&gt;4)-alpha-D-galacturonosyl](n) + n methanol + n H(+). The protein operates within glycan metabolism; pectin degradation; 2-dehydro-3-deoxy-D-gluconate from pectin: step 1/5. In terms of biological role, acts in the modification of cell walls via demethylesterification of cell wall pectin. In Arabidopsis thaliana (Mouse-ear cress), this protein is Probable pectinesterase 55 (PME55).